The following is a 397-amino-acid chain: Argininosuccinate synthase (397 aa).

8-16 serves as a coordination point for ATP; that stretch reads AYSGGLDTS. Residues Tyr86 and Ser91 each coordinate L-citrulline. ATP is bound at residue Gly116. 3 residues coordinate L-aspartate: Thr118, Asn122, and Asp123. Asn122 serves as a coordination point for L-citrulline. The L-citrulline site is built by Arg126, Ser175, Ser184, Glu260, and Tyr272.

The protein belongs to the argininosuccinate synthase family. Type 1 subfamily. In terms of assembly, homotetramer.

The protein localises to the cytoplasm. It catalyses the reaction L-citrulline + L-aspartate + ATP = 2-(N(omega)-L-arginino)succinate + AMP + diphosphate + H(+). Its pathway is amino-acid biosynthesis; L-arginine biosynthesis; L-arginine from L-ornithine and carbamoyl phosphate: step 2/3. The chain is Argininosuccinate synthase from Clostridium botulinum (strain Kyoto / Type A2).